The following is a 133-amino-acid chain: Late embryogenesis abundant protein B19.3 (133 aa).

Residues 1–133 (MASGQQERSE…IDESKFKTKS (133 aa)) are disordered. Basic and acidic residues-rich tracts occupy residues 7–19 (ERSE…REGE), 32–102 (EAQE…EMGR), and 113–133 (GGER…KTKS). 3 repeat units span residues 24–43 (GGTG…GRSR), 44–63 (GGQT…MGHK), and 64–83 (GGET…MGHK). Residues 24–83 (GGTGGKTLEAQEHLAEGRSRGGQTRKDQLGEEGYREMGHKGGETRKEQLGEEGYREMGHK) form a 3 X 20 AA tandem repeats region.

It belongs to the small hydrophilic plant seed protein family.

In terms of biological role, lea proteins are late embryonic proteins abundant in higher plant seed embryos. The chain is Late embryogenesis abundant protein B19.3 (B19.3) from Hordeum vulgare (Barley).